Consider the following 559-residue polypeptide: Protein GRAVITROPIC IN THE LIGHT 1 (559 aa).

The segment at Ala107–Ile127 is disordered. A compositionally biased stretch (acidic residues) spans Tyr114 to Ile127.

In terms of biological role, required for red (R) and far red (FR) light-induced and phytochrome-mediated deregulation of negative gravitropism leading to randomization of hypocotyl growth orientation. The sequence is that of Protein GRAVITROPIC IN THE LIGHT 1 from Arabidopsis thaliana (Mouse-ear cress).